A 1827-amino-acid polypeptide reads, in one-letter code: Sucrase-isomaltase, intestinal (1827 aa).

Topologically, residues 2-12 (AKRKFSGLEIT) are cytoplasmic. Ser-7 is subject to Phosphoserine; by PKA. The helical; Signal-anchor for type II membrane protein transmembrane segment at 13 to 32 (LIVLFVIVFIIAIALIAVLA) threads the bilayer. Residues 33–1827 (TKTPAVEEVN…LDDPIEISWS (1795 aa)) lie on the Lumenal side of the membrane. The tract at residues 39 to 64 (EEVNPSSSTPTTTSTTTSTSGSVSCP) is disordered. Residues 43-64 (PSSSTPTTTSTTTSTSGSVSCP) show a composition bias toward low complexity. The 50-residue stretch at 61–110 (VSCPSELNEVVNERINCIPEQSPTQAICAQRNCCWRPWNNSDIPWCFFVD) folds into the P-type 1 domain. Disulfide bonds link Cys-63–Cys-94, Cys-77–Cys-93, and Cys-88–Cys-106. Asn-99 carries N-linked (GlcNAc...) asparagine glycosylation. An isomaltase region spans residues 110 to 1007 (DNHGYNVEGM…DLQLNPTRTR (898 aa)). Residues Asp-264 and Asp-388 each coordinate substrate. Sulfotyrosine is present on residues Tyr-391 and Tyr-400. N-linked (GlcNAc...) asparagine glycosylation occurs at Asn-455. Asp-505 (nucleophile; for isomaltase activity) is an active-site residue. A disulfide bridge connects residues Cys-520 and Cys-545. Arg-588 contributes to the substrate binding site. Asp-604 acts as the For isomaltase activity in catalysis. The cysteines at positions 635 and 646 are disulfide-linked. Substrate is bound at residue His-662. Asn-859, Asn-896, and Asn-904 each carry an N-linked (GlcNAc...) asparagine glycan. The P-type 2 domain occupies 932-978 (DQTFLESEKITCYPDADIATQEKCTQRGCIWDTNTVNPRAPECYFPK). The tract at residues 1008–1827 (ITLPSEPITN…LDDPIEISWS (820 aa)) is sucrase. 6 N-linked (GlcNAc...) asparagine glycosylation sites follow: Asn-1235, Asn-1303, Asn-1325, Asn-1340, Asn-1354, and Asn-1368. Tyr-1382 and Tyr-1385 each carry sulfotyrosine. The Nucleophile; for sucrase activity role is filled by Asp-1394. Residue Glu-1397 is the For sucrase activity of the active site. The N-linked (GlcNAc...) asparagine glycan is linked to Asn-1403. Asp-1500 acts as the Proton donor; for sucrase activity in catalysis. Residues Asn-1535, Asn-1572, Asn-1748, Asn-1763, and Asn-1799 are each glycosylated (N-linked (GlcNAc...) asparagine).

Belongs to the glycosyl hydrolase 31 family. In terms of assembly, the resulting sucrase and isomaltase subunits stay associated with one another in a complex by non-covalent linkages. Post-translationally, the precursor is proteolytically cleaved when exposed to pancreatic proteases in the intestinal lumen. N- and O-glycosylated. In terms of processing, sulfated.

The protein localises to the apical cell membrane. It carries out the reaction Hydrolysis of sucrose and maltose by an alpha-D-glucosidase-type action.. The enzyme catalyses Hydrolysis of (1-&gt;6)-alpha-D-glucosidic linkages in some oligosaccharides produced from starch and glycogen by alpha-amylase, and in isomaltose.. Functionally, plays an important role in the final stage of carbohydrate digestion. Isomaltase activity is specific for both alpha-1,4- and alpha-1,6-oligosaccharides. In Oryctolagus cuniculus (Rabbit), this protein is Sucrase-isomaltase, intestinal (SI).